We begin with the raw amino-acid sequence, 212 residues long: Pyridoxine/pyridoxamine 5'-phosphate oxidase (212 aa).

Substrate is bound by residues Arg-7–Tyr-10 and Lys-65. FMN contacts are provided by residues Arg-60–Lys-65, Phe-75–Thr-76, Lys-82, and Gln-104. Residues Tyr-122, Arg-126, and Ser-130 each contribute to the substrate site. FMN is bound by residues Gln-139–Ser-140 and Trp-184. Arg-190–His-192 is a binding site for substrate. Arg-194 contacts FMN.

Belongs to the pyridoxamine 5'-phosphate oxidase family. In terms of assembly, homodimer. It depends on FMN as a cofactor.

It carries out the reaction pyridoxamine 5'-phosphate + O2 + H2O = pyridoxal 5'-phosphate + H2O2 + NH4(+). The enzyme catalyses pyridoxine 5'-phosphate + O2 = pyridoxal 5'-phosphate + H2O2. The protein operates within cofactor metabolism; pyridoxal 5'-phosphate salvage; pyridoxal 5'-phosphate from pyridoxamine 5'-phosphate: step 1/1. It participates in cofactor metabolism; pyridoxal 5'-phosphate salvage; pyridoxal 5'-phosphate from pyridoxine 5'-phosphate: step 1/1. Catalyzes the oxidation of either pyridoxine 5'-phosphate (PNP) or pyridoxamine 5'-phosphate (PMP) into pyridoxal 5'-phosphate (PLP). The chain is Pyridoxine/pyridoxamine 5'-phosphate oxidase from Aliarcobacter butzleri (strain RM4018) (Arcobacter butzleri).